A 179-amino-acid chain; its full sequence is Large ribosomal subunit protein uL5 (179 aa).

It belongs to the universal ribosomal protein uL5 family. As to quaternary structure, part of the 50S ribosomal subunit; part of the 5S rRNA/L5/L18/L25 subcomplex. Contacts the 5S rRNA and the P site tRNA. Forms a bridge to the 30S subunit in the 70S ribosome.

Functionally, this is one of the proteins that bind and probably mediate the attachment of the 5S RNA into the large ribosomal subunit, where it forms part of the central protuberance. In the 70S ribosome it contacts protein S13 of the 30S subunit (bridge B1b), connecting the 2 subunits; this bridge is implicated in subunit movement. Contacts the P site tRNA; the 5S rRNA and some of its associated proteins might help stabilize positioning of ribosome-bound tRNAs. This chain is Large ribosomal subunit protein uL5, found in Lachnoclostridium phytofermentans (strain ATCC 700394 / DSM 18823 / ISDg) (Clostridium phytofermentans).